Reading from the N-terminus, the 588-residue chain is 3-methylmercaptopropionyl-CoA dehydrogenase (588 aa).

Glutamate 435 functions as the Proton acceptor in the catalytic mechanism.

This sequence belongs to the acyl-CoA dehydrogenase family. FAD is required as a cofactor.

It carries out the reaction 3-(methylsulfanyl)propanoyl-CoA + oxidized [electron-transfer flavoprotein] + H(+) = 3-(methylsulfanyl)acryloyl-CoA + reduced [electron-transfer flavoprotein]. Involved in the assimilation of dimethylsulphoniopropionate (DMSP), an important compound in the fixation of carbon in marine phytoplankton, by mediating the conversion of 3-(methylthio)propanoyl-CoA (MMPA-CoA) to 3-(methylthio)acryloyl-CoA (MTA-CoA). This Ruegeria pomeroyi (strain ATCC 700808 / DSM 15171 / DSS-3) (Silicibacter pomeroyi) protein is 3-methylmercaptopropionyl-CoA dehydrogenase.